The following is a 392-amino-acid chain: 23S rRNA (uracil(747)-C(5))-methyltransferase RlmC (392 aa).

Residues C4, C12, C15, and C93 each contribute to the [4Fe-4S] cluster site. Residues Q218, F247, E275, and N321 each coordinate S-adenosyl-L-methionine. The active-site Nucleophile is C348.

It belongs to the class I-like SAM-binding methyltransferase superfamily. RNA M5U methyltransferase family. RlmC subfamily.

It carries out the reaction uridine(747) in 23S rRNA + S-adenosyl-L-methionine = 5-methyluridine(747) in 23S rRNA + S-adenosyl-L-homocysteine + H(+). Catalyzes the formation of 5-methyl-uridine at position 747 (m5U747) in 23S rRNA. The sequence is that of 23S rRNA (uracil(747)-C(5))-methyltransferase RlmC from Haemophilus influenzae (strain 86-028NP).